The sequence spans 446 residues: Low-affinity gluconate transporter (446 aa).

Residue M1 is a topological domain, cytoplasmic. Residues 2 to 22 (TTLTLVLTAVGSVLLLLFLVM) form a helical membrane-spanning segment. The Periplasmic portion of the chain corresponds to 23 to 26 (KARM). A helical membrane pass occupies residues 27-47 (HAFLALMVVSMGAGLFSGMPL). Topologically, residues 48–58 (DKIAATMEKGM) are cytoplasmic. The helical transmembrane segment at 59–79 (GGTLGFLAVVVALGAMFGKIL) threads the bilayer. At 80 to 109 (HETGAVDQIAVKMLKSFGHSRAHYAIGLAG) the chain is on the periplasmic side. The chain crosses the membrane as a helical span at residues 110 to 130 (LVCALPLFFEVAIVLLISVAF). Over 131–142 (SMARHTGTNLVK) the chain is Cytoplasmic. The chain crosses the membrane as a helical span at residues 143-163 (LVIPLFAGVAAAAAFLVPGPA). Topologically, residues 164–176 (PMLLASQMNADFG) are periplasmic. Residues 177 to 197 (WMILIGLCAAIPGMIIAGPLW) traverse the membrane as a helical segment. The Cytoplasmic segment spans residues 198–225 (GNFISRYVELHIPDDISEPHLGEGKMPS). The chain crosses the membrane as a helical span at residues 226–246 (FGFSLSLILLPLVLVGLKTIA). Topologically, residues 247 to 261 (ARFVPEGSTAYEWFE) are periplasmic. The helical transmembrane segment at 262–282 (FIGHPFTAILVACLVAIYGLA) threads the bilayer. Residues 283 to 294 (MRQGMPKDKVME) are Cytoplasmic-facing. A helical transmembrane segment spans residues 295-315 (ICGHALQPAGIILLVIGAGGV). The Periplasmic segment spans residues 316–330 (FKQVLVDSGVGPALG). The helical transmembrane segment at 331–351 (EALTGMGLPIAITCFVLAAAV) threads the bilayer. Position 352 (R352) is a topological domain, cytoplasmic. Residues 353–373 (IIQGSATVACLTAVGLVMPVI) form a helical membrane-spanning segment. Residues 374–387 (EQLNYSGAQMAALS) are Periplasmic-facing. The helical transmembrane segment at 388–408 (ICIAGGSIVVSHVNDAGFWLF) threads the bilayer. At 409-424 (GKFTGATEAETLKTWT) the chain is on the cytoplasmic side. The helical transmembrane segment at 425-445 (MMETILGTVGAIVGMIAFQLL) threads the bilayer. S446 is a topological domain (periplasmic).

Belongs to the GntP permease family.

Its subcellular location is the cell inner membrane. Part of the gluconate utilization system Gnt-I; low-affinity intake of gluconate. This chain is Low-affinity gluconate transporter (gntU), found in Escherichia coli O157:H7.